We begin with the raw amino-acid sequence, 1012 residues long: Isoleucine--tRNA ligase, mitochondrial (1012 aa).

The transit peptide at 1 to 48 directs the protein to the mitochondrion; the sequence is MHWGLCPRGPGAAAVAAAGSFWGPARLPSRLGCLGMTRRLVVRSVAGA. The residue at position 56 (K56) is an N6-succinyllysine. K74 carries the post-translational modification N6-acetyllysine; alternate. The residue at position 74 (K74) is an N6-succinyllysine; alternate. The short motif at 116–126 is the 'HIGH' region element; it reads PYANGDPHVGH. K194 bears the N6-succinyllysine mark. An N6-acetyllysine modification is found at K233. K241 is modified (N6-acetyllysine; alternate). Residue K241 is modified to N6-succinyllysine; alternate. N6-succinyllysine is present on residues K479 and K500. ATP is bound by residues K664 and K667. The short motif at 664-668 is the 'KMSKS' region element; sequence KMSKS. The residue at position 725 (K725) is an N6-acetyllysine. An N6-acetyllysine; alternate mark is found at K775 and K781. An N6-succinyllysine; alternate mark is found at K775 and K781.

Belongs to the class-I aminoacyl-tRNA synthetase family.

Its subcellular location is the mitochondrion matrix. The catalysed reaction is tRNA(Ile) + L-isoleucine + ATP = L-isoleucyl-tRNA(Ile) + AMP + diphosphate. In terms of biological role, aminoacyl-tRNA synthetase that catalyzes the specific attachment of isoleucine to its cognate tRNA (tRNA(Ile)). This is Isoleucine--tRNA ligase, mitochondrial from Mus musculus (Mouse).